We begin with the raw amino-acid sequence, 95 residues long: Small ribosomal subunit protein bS6 (95 aa).

Belongs to the bacterial ribosomal protein bS6 family.

In terms of biological role, binds together with bS18 to 16S ribosomal RNA. This chain is Small ribosomal subunit protein bS6, found in Rhodococcus jostii (strain RHA1).